A 127-amino-acid chain; its full sequence is uncharacterized protein (127 aa).

The chain crosses the membrane as a helical span at residues 85 to 107; sequence VYLGKIGFVLLHVFYLSCIAYYD.

It localises to the mitochondrion membrane. This is an uncharacterized protein from Dictyostelium discoideum (Social amoeba).